Reading from the N-terminus, the 164-residue chain is tRNA (cytidine(34)-2'-O)-methyltransferase (164 aa).

S-adenosyl-L-methionine is bound by residues Met80, Gly102, Val124, and Ser132.

This sequence belongs to the class IV-like SAM-binding methyltransferase superfamily. RNA methyltransferase TrmH family. TrmL subfamily. As to quaternary structure, homodimer.

It localises to the cytoplasm. The catalysed reaction is cytidine(34) in tRNA + S-adenosyl-L-methionine = 2'-O-methylcytidine(34) in tRNA + S-adenosyl-L-homocysteine + H(+). It carries out the reaction 5-carboxymethylaminomethyluridine(34) in tRNA(Leu) + S-adenosyl-L-methionine = 5-carboxymethylaminomethyl-2'-O-methyluridine(34) in tRNA(Leu) + S-adenosyl-L-homocysteine + H(+). Methylates the ribose at the nucleotide 34 wobble position in the two leucyl isoacceptors tRNA(Leu)(CmAA) and tRNA(Leu)(cmnm5UmAA). Catalyzes the methyl transfer from S-adenosyl-L-methionine to the 2'-OH of the wobble nucleotide. The sequence is that of tRNA (cytidine(34)-2'-O)-methyltransferase from Polaromonas sp. (strain JS666 / ATCC BAA-500).